A 424-amino-acid chain; its full sequence is Imidazolonepropionase (424 aa).

H84 and H86 together coordinate Fe(3+). Zn(2+) contacts are provided by H84 and H86. Residues R93, Y156, and H189 each coordinate 4-imidazolone-5-propanoate. Residue Y156 participates in N-formimidoyl-L-glutamate binding. H254 is a Fe(3+) binding site. H254 serves as a coordination point for Zn(2+). 4-imidazolone-5-propanoate is bound at residue E257. D328 contributes to the Fe(3+) binding site. Position 328 (D328) interacts with Zn(2+). Residues N330 and G332 each coordinate N-formimidoyl-L-glutamate. Position 333 (S333) interacts with 4-imidazolone-5-propanoate.

This sequence belongs to the metallo-dependent hydrolases superfamily. HutI family. Zn(2+) serves as cofactor. It depends on Fe(3+) as a cofactor.

Its subcellular location is the cytoplasm. It catalyses the reaction 4-imidazolone-5-propanoate + H2O = N-formimidoyl-L-glutamate. Its pathway is amino-acid degradation; L-histidine degradation into L-glutamate; N-formimidoyl-L-glutamate from L-histidine: step 3/3. Catalyzes the hydrolytic cleavage of the carbon-nitrogen bond in imidazolone-5-propanoate to yield N-formimidoyl-L-glutamate. It is the third step in the universal histidine degradation pathway. This is Imidazolonepropionase from Geobacillus sp. (strain WCH70).